The chain runs to 159 residues: Phosphopantetheine adenylyltransferase (159 aa).

Residue T10 coordinates substrate. Residues 10–11 (TF) and H18 contribute to the ATP site. K42, M74, and R88 together coordinate substrate. ATP is bound by residues 89-91 (GLR), E99, and 124-130 (WSFISSS).

Belongs to the bacterial CoaD family. As to quaternary structure, homohexamer. Mg(2+) serves as cofactor.

The protein resides in the cytoplasm. The catalysed reaction is (R)-4'-phosphopantetheine + ATP + H(+) = 3'-dephospho-CoA + diphosphate. The protein operates within cofactor biosynthesis; coenzyme A biosynthesis; CoA from (R)-pantothenate: step 4/5. Reversibly transfers an adenylyl group from ATP to 4'-phosphopantetheine, yielding dephospho-CoA (dPCoA) and pyrophosphate. In Yersinia enterocolitica serotype O:8 / biotype 1B (strain NCTC 13174 / 8081), this protein is Phosphopantetheine adenylyltransferase.